The chain runs to 845 residues: Protein P (845 aa).

A terminal protein domain (TP) region spans residues 1 to 179; sequence MPLSYQHFRK…FCGSPYSWEQ (179 aa). The spacer stretch occupies residues 180 to 348; sequence ELQHGRLVIK…YCLSHLVNLR (169 aa). The disordered stretch occupies residues 226–246; the sequence is GLQPHQGPLASSQPGRSGSIR. The interval 349–692 is polymerase/reverse transcriptase domain (RT); the sequence is EDRGPCDEHG…YMNLYPVARQ (344 aa). Positions 359-602 constitute a Reverse transcriptase domain; it reads EHHIRIPRTP…YSLNFMGYVI (244 aa). Aspartate 431, aspartate 553, and aspartate 554 together coordinate Mg(2+).

This sequence belongs to the hepadnaviridae P protein family.

The enzyme catalyses DNA(n) + a 2'-deoxyribonucleoside 5'-triphosphate = DNA(n+1) + diphosphate. The catalysed reaction is Endonucleolytic cleavage to 5'-phosphomonoester.. With respect to regulation, activated by host HSP70 and HSP40 in vitro to be able to bind the epsilon loop of the pgRNA. Because deletion of the RNase H region renders the protein partly chaperone-independent, the chaperones may be needed indirectly to relieve occlusion of the RNA-binding site by this domain. Inhibited by several reverse-transcriptase inhibitors: Lamivudine, Adefovir and Entecavir. In terms of biological role, multifunctional enzyme that converts the viral RNA genome into dsDNA in viral cytoplasmic capsids. This enzyme displays a DNA polymerase activity that can copy either DNA or RNA templates, and a ribonuclease H (RNase H) activity that cleaves the RNA strand of RNA-DNA heteroduplexes in a partially processive 3'- to 5'-endonucleasic mode. Neo-synthesized pregenomic RNA (pgRNA) are encapsidated together with the P protein, and reverse-transcribed inside the nucleocapsid. Initiation of reverse-transcription occurs first by binding the epsilon loop on the pgRNA genome, and is initiated by protein priming, thereby the 5'-end of (-)DNA is covalently linked to P protein. Partial (+)DNA is synthesized from the (-)DNA template and generates the relaxed circular DNA (RC-DNA) genome. After budding and infection, the RC-DNA migrates in the nucleus, and is converted into a plasmid-like covalently closed circular DNA (cccDNA). The activity of P protein does not seem to be necessary for cccDNA generation, and is presumably released from (+)DNA by host nuclear DNA repair machinery. This Hepatitis B virus genotype A2 subtype adw2 (isolate Germany/991/1990) (HBV-A) protein is Protein P.